Here is a 294-residue protein sequence, read N- to C-terminus: 2-oxoglutaramate amidase (294 aa).

The CN hydrolase domain occupies 16–261; that stretch reads LDVAAVQVKF…EAVLRATLNF (246 aa). Glu-55 acts as the Proton acceptor in catalysis. The Proton donor role is filled by Lys-129. Residue Cys-168 is the Nucleophile of the active site.

This sequence belongs to the carbon-nitrogen hydrolase superfamily. NIT1/NIT2 family.

The enzyme catalyses 2-oxoglutaramate + H2O = 2-oxoglutarate + NH4(+). Its pathway is alkaloid degradation; nicotine degradation. Catalyzes the conversion of 2-oxoglutaramate to 2-oxoglutarate. Together with glutamate dehydrogenase, may form a physiologically relevant enzyme couple, leading to transformation of metabolically inert 2-oxoglutaramate derived from trihydroxypyridine into glutamate, a central compound of nitrogen metabolism. The chain is 2-oxoglutaramate amidase from Paenarthrobacter nicotinovorans (Arthrobacter nicotinovorans).